The sequence spans 135 residues: Interleukin-5 (135 aa).

A signal peptide spans 1–19 (MRVLLQLGLLALGAVCVCA). Asparagine 48, asparagine 77, and asparagine 91 each carry an N-linked (GlcNAc...) asparagine glycan.

It belongs to the IL-5 family. In terms of assembly, homodimer; disulfide-linked. Interacts with IL5RA. Interacts with CSF2RB.

It localises to the secreted. Homodimeric cytokine expressed predominantly by T-lymphocytes and NK cells that plays an important role in the survival, differentiation, and chemotaxis of eosinophils. Also acts on activated and resting B-cells to induce immunoglobulin production, growth, and differentiation. Mechanistically, exerts its biological effects through a receptor composed of IL5RA subunit and the cytokine receptor common subunit beta/CSF2RB. Binding to the receptor leads to activation of various kinases including LYN, SYK and JAK2 and thereby propagates signals through the RAS-MAPK and JAK-STAT5 pathways respectively. This is Interleukin-5 (IL5) from Cavia porcellus (Guinea pig).